Here is a 238-residue protein sequence, read N- to C-terminus: Dof zinc finger protein MNB1A (238 aa).

Residues 1-13 show a composition bias toward low complexity; the sequence is MQEASSAAAAGAE. The interval 1-48 is disordered; it reads MQEASSAAAAGAEPGRRAAQHQFAGVDLRRPKGYAAPAPAPAVGEGDP. The segment at 47–101 adopts a Dof-type zinc-finger fold; that stretch reads DPCPRCASRDTKFCYYNNYNTSQPRHFCKGCRRYWTKGGTLRNVPVGGGTRKKPS. The Zn(2+) site is built by Cys-49, Cys-52, Cys-74, and Cys-77. A disordered region spans residues 85–155; that stretch reads GTLRNVPVGG…TATTTTTTSE (71 aa). A compositionally biased stretch (basic residues) spans 119 to 130; sequence PKKKPASKKRRV. Positions 138 to 155 are enriched in low complexity; it reads ATAADPGKTATTTTTTSE.

Expressed in all tissues examined.

The protein resides in the nucleus. Functionally, transcription factor that binds specifically to a 5'-AA[AG]G-3' consensus core sequence at the MNF1-binding site. The polypeptide is Dof zinc finger protein MNB1A (MNB1A) (Zea mays (Maize)).